We begin with the raw amino-acid sequence, 342 residues long: Voltage-gated hydrogen channel 1 (342 aa).

Disordered stretches follow at residues 1-20 and 74-102; these read MEGDNCNKSRHKSHNMINPN and FNDNNNHERPAPQEQSTQNTMISMQSEQK. The Cytoplasmic portion of the chain corresponds to 1–148; sequence MEGDNCNKSR…KLRHILHSKP (148 aa). Residues 86–102 are compositionally biased toward polar residues; sequence QEQSTQNTMISMQSEQK. The chain crosses the membrane as a helical span at residues 149-169; sequence IHVAIIVLVVLDSFLVVGELL. The Extracellular segment spans residues 170–185; sequence IDLKVIIVPHGNPAPE. The helical transmembrane segment at 186–208 threads the bilayer; that stretch reads ILHGFSLSILSIFMVEIALKIIA. Over 209-217 the chain is Cytoplasmic; that stretch reads DHRHFIHHK. A helical transmembrane segment spans residues 218-238; it reads VEVLDAVVVVISFGVDIALIF. Topologically, residues 239 to 247 are extracellular; it reads VGESEALAA. A helical transmembrane segment spans residues 248–268; it reads IGLLVILRLWRVFRIINGIIV. Topologically, residues 269-342 are cytoplasmic; the sequence is TVKTKADDRV…HSTTTASADV (74 aa). Residues 271–315 are a coiled coil; the sequence is KTKADDRVHEIKKKNSELELQIHNLEEKLSQKEQDMSRLHEILRC.

Belongs to the hydrogen channel family. Homodimer.

It localises to the membrane. Its subcellular location is the cell membrane. Its activity is regulated as follows. Less sensitive to zinc ions as compared to the mammalian homologs. Mediates the voltage-dependent proton permeability of excitable membranes. Forms a proton-selective channel through which protons may pass in accordance with their electrochemical gradient. This is Voltage-gated hydrogen channel 1 (HVCN1) from Ciona intestinalis (Transparent sea squirt).